The chain runs to 677 residues: Probable serine/threonine-protein kinase mkcF (677 aa).

The SH3 domain maps to 1–58 (MLYLVATGDYKGPSENHLSFTKGQRIEFLERTENGFIKGKLDGKVGIFPSSLITIETR). A disordered region spans residues 72–244 (TETKDDTGSI…SSSSSSTKRR (173 aa)). Positions 79–94 (GSISSSTSTSTSSLTT) are enriched in low complexity. A compositionally biased stretch (polar residues) spans 105–126 (GEQQPSTSTINGQSSSTSPILQ). Over residues 127–146 (SNGTTNTTTSSTSNNNIGDN) the composition is skewed to low complexity. The segment covering 158 to 174 (TTSNHSKSASRLSVASF) has biased composition (polar residues). Low complexity predominate over residues 175 to 192 (STTTTATTTTTTTTTATS). A compositionally biased stretch (basic and acidic residues) spans 209 to 224 (DKKSKDDDKSEKEGLY). Positions 230-240 (SSSSSSSSSSS) are enriched in low complexity. The Protein kinase domain occupies 401-646 (IKFTHMVGRG…VDKLMRHPFF (246 aa)). ATP contacts are provided by residues 407 to 415 (VGRGQYGKV) and Lys428. The active-site Proton acceptor is Asp519.

This sequence belongs to the protein kinase superfamily. Ser/Thr protein kinase family. STE20 subfamily. Mg(2+) is required as a cofactor.

It carries out the reaction L-seryl-[protein] + ATP = O-phospho-L-seryl-[protein] + ADP + H(+). It catalyses the reaction L-threonyl-[protein] + ATP = O-phospho-L-threonyl-[protein] + ADP + H(+). The sequence is that of Probable serine/threonine-protein kinase mkcF from Dictyostelium discoideum (Social amoeba).